Here is a 196-residue protein sequence, read N- to C-terminus: Probable splicing factor, arginine/serine-rich 4 (196 aa).

Residues 19 to 97 form the RRM domain; that stretch reads TSLKIDNLSY…RELRVTLAKY (79 aa). A compositionally biased stretch (basic and acidic residues) spans 91-106; sequence RVTLAKYDRPSDERGG. Positions 91–196 are disordered; that stretch reads RVTLAKYDRP…SPSRSRSNSR (106 aa). Positions 112 to 141 are enriched in basic residues; sequence GRRRSRSPRRRSRSPRYSRSRSPRRSRSRT. 2 stretches are compositionally biased toward basic and acidic residues: residues 145–160 and 167–176; these read PSRDRRDSPDRRDNSR and PPREDGSPKE. The segment covering 184–196 has biased composition (low complexity); that stretch reads ASRSPSRSRSNSR.

It belongs to the splicing factor SR family. In terms of processing, extensively phosphorylated on serine residues in the RS domain.

It is found in the nucleus. May play a functionally redundant role in embryogenesis. The polypeptide is Probable splicing factor, arginine/serine-rich 4 (rsp-4) (Caenorhabditis elegans).